Reading from the N-terminus, the 469-residue chain is MEESNRSSTVLFDKYNIGRLLGTGNFAKVYHGTEISTGDDVAIKVIKKDHVFKRRGMMEQIEREIAVMRLLRHPNVVELREVMATKKKIFFVMEYVNGGELFEMIDRDGKLPEDLARKYFQQLISAVDFCHSRGVFHRDIKPENLLLDGEGDLKVTDFGLSALMMPEGLGGRRGSSDDLLHTRCGTPAYVAPEVLRNKGYDGAMADIWSCGIVLYALLAGFLPFIDENVMTLYTKIFKAECEFPPWFSLESKELLSRLLVPDPEQRISMSEIKMIPWFRKNFTPSVAFSIDETIPSPPEPPTKKKKKDLNEKEDDGASPRSFNAFQFITSMSSGFDLSNLFEIKRKPKRMFTSKFPAKSVKERLETAAREMDMRVKHVKDCKMKLQRRTEGRKGRLSVTAEVFEVAPEVSVVEFCKTSGDTLEYYLFCEDDVRPALKDIVWSWQGDDDEDDVTTNDNVDTNDNKINNVS.

A Protein kinase domain is found at 15–278 (YNIGRLLGTG…MSEIKMIPWF (264 aa)). ATP contacts are provided by residues 21 to 29 (LGTGNFAKV) and Lys44. The active-site Proton acceptor is Asp139. An activation loop region spans residues 157 to 193 (DFGLSALMMPEGLGGRRGSSDDLLHTRCGTPAYVAPE). Ser161 bears the Phosphoserine mark. The residue at position 182 (Thr182) is a Phosphothreonine. The tract at residues 290 to 320 (IDETIPSPPEPPTKKKKKDLNEKEDDGASPR) is disordered. In terms of domain architecture, NAF spans 317–342 (ASPRSFNAFQFITSMSSGFDLSNLFE). The PPI stretch occupies residues 346-376 (KPKRMFTSKFPAKSVKERLETAAREMDMRVK). The interval 447 to 469 (DDEDDVTTNDNVDTNDNKINNVS) is disordered. Residues 454-469 (TNDNVDTNDNKINNVS) show a composition bias toward low complexity.

The protein belongs to the protein kinase superfamily. CAMK Ser/Thr protein kinase family. SNF1 subfamily. In terms of assembly, part of a K(+)-channel calcium-sensing kinase/phosphatase complex composed by a calcium sensor CBL (CBL1, CBL2, CBL3 or CBL9), a kinase CIPK (CIPK6, CIPK16 or CIPK23), a phosphatase PP2C (AIP1) and a K(+)-channel (AKT1). Interacts with AKT1, CBL1, CBL2, CBL3 and CBL9. Mn(2+) serves as cofactor.

It catalyses the reaction L-seryl-[protein] + ATP = O-phospho-L-seryl-[protein] + ADP + H(+). The catalysed reaction is L-threonyl-[protein] + ATP = O-phospho-L-threonyl-[protein] + ADP + H(+). Functionally, CIPK serine-threonine protein kinases interact with CBL proteins. Binding of a CBL protein to the regulatory NAF domain of CIPK protein lead to the activation of the kinase in a calcium-dependent manner. Downstream of CBL1, CBL2, CBL3 and CBL9, regulates by phosphorylation the K(+) conductance and uptake of AKT1. The protein is CBL-interacting serine/threonine-protein kinase 16 (CIPK16) of Arabidopsis thaliana (Mouse-ear cress).